Here is a 163-residue protein sequence, read N- to C-terminus: Olfactory marker protein (163 aa).

Ala2 is subject to N-acetylalanine.

The protein belongs to the olfactory marker protein family. As to quaternary structure, interacts with BEX1 and BEX2. Uniquely associated with mature olfactory receptor neurons.

It is found in the cytoplasm. In terms of biological role, may act as a modulator of the olfactory signal-transduction cascade. The polypeptide is Olfactory marker protein (Omp) (Mus musculus (Mouse)).